The primary structure comprises 421 residues: MPEGRHVAIIGAGAVGVISAIEALREGHRVTLIDPGEPGGEQAASYGNAGWLSSHSVIPPAEPGIWKKVPGYLMDPLGPLAIRWSYLPKALPWLIKYLLSGWTEARVEKTAFALRDLLKDAPLLHRKLAEEAGVPELIERNGVMHAFPSRGNFDNDLGWRLRKKVGVAWLELNADEMRQREPDLHPRYSFGVVVEEAGRCRDPGAYVAALANHALASGAKLVRAKATGLKLSGNKLVAVVTETGEIACDAAVVAAGARSKQLTASVGDPLPLETERGYHVMIENPETGPRSSIMASDAKMVVNWTNKGLRAAGTVEIAGLEAAPNWKRAEILRDHLFSMFPKLPRDIPASRIKTWFGHRPSMPDGLPCIGHARASRDIVYAFGHGHVGLVGSARTGRLVAQLLSGKQPEIPLAPFSPTRFL.

Positions 12, 13, 14, 15, 47, 64, 65, 225, 226, 359, 385, 388, and 389 each coordinate FAD. R359 contacts D-proline. A D-serine-binding site is contributed by R359.

The protein belongs to the DAMOX/DASOX family. FAD is required as a cofactor.

The protein localises to the cytoplasm. Its subcellular location is the secreted. The protein resides in the cell wall. It catalyses the reaction a D-alpha-amino acid + O2 + H2O = a 2-oxocarboxylate + H2O2 + NH4(+). Functionally, catalyzes the oxidative deamination of D-amino acids with broad substrate specificity. In Bradyrhizobium diazoefficiens (strain JCM 10833 / BCRC 13528 / IAM 13628 / NBRC 14792 / USDA 110), this protein is D-amino-acid oxidase.